A 170-amino-acid polypeptide reads, in one-letter code: ATP synthase subunit b (170 aa).

Residues 22 to 44 (IINLAVVVFGLYKFLPGFLGKIL) traverse the membrane as a helical segment.

This sequence belongs to the ATPase B chain family. F-type ATPases have 2 components, F(1) - the catalytic core - and F(0) - the membrane proton channel. F(1) has five subunits: alpha(3), beta(3), gamma(1), delta(1), epsilon(1). F(0) has four main subunits: a(1), b(1), b'(1) and c(10-14). The alpha and beta chains form an alternating ring which encloses part of the gamma chain. F(1) is attached to F(0) by a central stalk formed by the gamma and epsilon chains, while a peripheral stalk is formed by the delta, b and b' chains.

It localises to the cellular thylakoid membrane. In terms of biological role, f(1)F(0) ATP synthase produces ATP from ADP in the presence of a proton or sodium gradient. F-type ATPases consist of two structural domains, F(1) containing the extramembraneous catalytic core and F(0) containing the membrane proton channel, linked together by a central stalk and a peripheral stalk. During catalysis, ATP synthesis in the catalytic domain of F(1) is coupled via a rotary mechanism of the central stalk subunits to proton translocation. Its function is as follows. Component of the F(0) channel, it forms part of the peripheral stalk, linking F(1) to F(0). This Prochlorococcus marinus (strain NATL1A) protein is ATP synthase subunit b.